The following is a 558-amino-acid chain: Urocanate hydratase (558 aa).

NAD(+) is bound by residues 54–55 (GG), Gln132, 178–180 (GMG), Glu198, 244–245 (NA), 265–269 (QTSAH), 275–276 (YL), and Tyr324. Residue Cys412 is part of the active site. Gly494 is a binding site for NAD(+).

The protein belongs to the urocanase family. The cofactor is NAD(+).

It is found in the cytoplasm. The catalysed reaction is 4-imidazolone-5-propanoate = trans-urocanate + H2O. Its pathway is amino-acid degradation; L-histidine degradation into L-glutamate; N-formimidoyl-L-glutamate from L-histidine: step 2/3. Catalyzes the conversion of urocanate to 4-imidazolone-5-propionate. The chain is Urocanate hydratase from Acinetobacter baumannii (strain SDF).